We begin with the raw amino-acid sequence, 620 residues long: Probable potassium transport system protein Kup (620 aa).

12 helical membrane passes run 8–28 (VGLLVSAVGVVFGDIGTSPLY), 50–70 (VLSLVFWTVMLLVTVKYVILI), 102–122 (MLLGVIAAALFYGDSMITPAI), 136–156 (PDLKAYVVPITALVLTGLFAI), 168–188 (FGPVMCLWFVTLALLGIANIV), 211–231 (LMSFYALGTVVLAVTGGEALY), 246–266 (WFSLVLPALLLNYFGQGALLI), 284–304 (MVMPMVALATLATVIASQAVI), 336–356 (IYVPFTNWTLYFAVMALVIGF), 368–388 (IAVTGTMMIDTILVSFVMALL), 393–413 (MALVIVVAGTLLLVDFAYFAA), and 415–435 (IIKVAQGGWFPLFIGFISFTV).

The protein belongs to the HAK/KUP transporter (TC 2.A.72) family.

The protein localises to the cell inner membrane. It carries out the reaction K(+)(in) + H(+)(in) = K(+)(out) + H(+)(out). Transport of potassium into the cell. Likely operates as a K(+):H(+) symporter. This chain is Probable potassium transport system protein Kup, found in Rhodopseudomonas palustris (strain HaA2).